We begin with the raw amino-acid sequence, 556 residues long: Protein F37C4.5 (556 aa).

Ala-2 is modified (N-acetylalanine).

The polypeptide is Protein F37C4.5 (Caenorhabditis elegans).